Reading from the N-terminus, the 308-residue chain is Ribosomal RNA large subunit methyltransferase F (308 aa).

The protein belongs to the methyltransferase superfamily. METTL16/RlmF family.

It localises to the cytoplasm. The enzyme catalyses adenosine(1618) in 23S rRNA + S-adenosyl-L-methionine = N(6)-methyladenosine(1618) in 23S rRNA + S-adenosyl-L-homocysteine + H(+). Functionally, specifically methylates the adenine in position 1618 of 23S rRNA. The chain is Ribosomal RNA large subunit methyltransferase F from Salmonella heidelberg (strain SL476).